The primary structure comprises 164 residues: UPF0178 protein RPB_3201 (164 aa).

It belongs to the UPF0178 family.

This chain is UPF0178 protein RPB_3201, found in Rhodopseudomonas palustris (strain HaA2).